The following is a 79-amino-acid chain: Small ribosomal subunit protein bS16 (79 aa).

This sequence belongs to the bacterial ribosomal protein bS16 family.

This is Small ribosomal subunit protein bS16 from Nitratidesulfovibrio vulgaris (strain ATCC 29579 / DSM 644 / CCUG 34227 / NCIMB 8303 / VKM B-1760 / Hildenborough) (Desulfovibrio vulgaris).